The primary structure comprises 208 residues: dTTP/UTP pyrophosphatase (208 aa).

The active-site Proton acceptor is D79.

This sequence belongs to the Maf family. YhdE subfamily. A divalent metal cation serves as cofactor.

Its subcellular location is the cytoplasm. It carries out the reaction dTTP + H2O = dTMP + diphosphate + H(+). The enzyme catalyses UTP + H2O = UMP + diphosphate + H(+). Nucleoside triphosphate pyrophosphatase that hydrolyzes dTTP and UTP. May have a dual role in cell division arrest and in preventing the incorporation of modified nucleotides into cellular nucleic acids. The sequence is that of dTTP/UTP pyrophosphatase from Mesorhizobium japonicum (strain LMG 29417 / CECT 9101 / MAFF 303099) (Mesorhizobium loti (strain MAFF 303099)).